The primary structure comprises 330 residues: Beta-ketoacyl-[acyl-carrier-protein] synthase III (330 aa).

Residues Cys-115 and His-255 contribute to the active site. The segment at 256 to 260 is ACP-binding; it reads QANFR. Asn-285 is a catalytic residue.

The protein belongs to the thiolase-like superfamily. FabH family. Homodimer.

The protein resides in the cytoplasm. It catalyses the reaction malonyl-[ACP] + acetyl-CoA + H(+) = 3-oxobutanoyl-[ACP] + CO2 + CoA. The protein operates within lipid metabolism; fatty acid biosynthesis. Catalyzes the condensation reaction of fatty acid synthesis by the addition to an acyl acceptor of two carbons from malonyl-ACP. Catalyzes the first condensation reaction which initiates fatty acid synthesis and may therefore play a role in governing the total rate of fatty acid production. Possesses both acetoacetyl-ACP synthase and acetyl transacylase activities. Its substrate specificity determines the biosynthesis of branched-chain and/or straight-chain of fatty acids. In Helicobacter pylori (strain P12), this protein is Beta-ketoacyl-[acyl-carrier-protein] synthase III.